A 65-amino-acid chain; its full sequence is Large ribosomal subunit protein bL35 (65 aa).

It belongs to the bacterial ribosomal protein bL35 family.

The protein is Large ribosomal subunit protein bL35 of Psychrobacter arcticus (strain DSM 17307 / VKM B-2377 / 273-4).